Here is a 156-residue protein sequence, read N- to C-terminus: ATP synthase subunit b (156 aa).

The chain crosses the membrane as a helical span at residues 7-27 (LFAQMIVFFVLWWVVARFVWP).

The protein belongs to the ATPase B chain family. In terms of assembly, F-type ATPases have 2 components, F(1) - the catalytic core - and F(0) - the membrane proton channel. F(1) has five subunits: alpha(3), beta(3), gamma(1), delta(1), epsilon(1). F(0) has three main subunits: a(1), b(2) and c(10-14). The alpha and beta chains form an alternating ring which encloses part of the gamma chain. F(1) is attached to F(0) by a central stalk formed by the gamma and epsilon chains, while a peripheral stalk is formed by the delta and b chains.

Its subcellular location is the cell inner membrane. Its function is as follows. F(1)F(0) ATP synthase produces ATP from ADP in the presence of a proton or sodium gradient. F-type ATPases consist of two structural domains, F(1) containing the extramembraneous catalytic core and F(0) containing the membrane proton channel, linked together by a central stalk and a peripheral stalk. During catalysis, ATP synthesis in the catalytic domain of F(1) is coupled via a rotary mechanism of the central stalk subunits to proton translocation. Component of the F(0) channel, it forms part of the peripheral stalk, linking F(1) to F(0). The chain is ATP synthase subunit b from Polynucleobacter necessarius subsp. necessarius (strain STIR1).